A 205-amino-acid chain; its full sequence is Imidazoleglycerol-phosphate dehydratase (205 aa).

A disordered region spans residues 1 to 27 (MKQASPRAGGAKARRGQVARKTKETDV).

The protein belongs to the imidazoleglycerol-phosphate dehydratase family.

Its subcellular location is the cytoplasm. It catalyses the reaction D-erythro-1-(imidazol-4-yl)glycerol 3-phosphate = 3-(imidazol-4-yl)-2-oxopropyl phosphate + H2O. It participates in amino-acid biosynthesis; L-histidine biosynthesis; L-histidine from 5-phospho-alpha-D-ribose 1-diphosphate: step 6/9. The chain is Imidazoleglycerol-phosphate dehydratase from Anaeromyxobacter sp. (strain Fw109-5).